Consider the following 456-residue polypeptide: Arginine biosynthesis bifunctional protein ArgJ, mitochondrial (456 aa).

Positions 184, 213, 224, 311, 451, and 456 each coordinate substrate. Catalysis depends on Thr224, which acts as the Nucleophile.

This sequence belongs to the ArgJ family. In terms of assembly, heterodimer of an alpha and a beta chain. Post-translationally, the alpha and beta chains are autoproteolytically processed from a single precursor protein within the mitochondrion.

It localises to the mitochondrion matrix. The enzyme catalyses N(2)-acetyl-L-ornithine + L-glutamate = N-acetyl-L-glutamate + L-ornithine. It catalyses the reaction L-glutamate + acetyl-CoA = N-acetyl-L-glutamate + CoA + H(+). Its pathway is amino-acid biosynthesis; L-arginine biosynthesis; L-ornithine and N-acetyl-L-glutamate from L-glutamate and N(2)-acetyl-L-ornithine (cyclic): step 1/1. It functions in the pathway amino-acid biosynthesis; L-arginine biosynthesis; N(2)-acetyl-L-ornithine from L-glutamate: step 1/4. In terms of biological role, catalyzes two activities which are involved in the cyclic version of arginine biosynthesis: the synthesis of acetylglutamate from glutamate and acetyl-CoA, and of ornithine by transacetylation between acetylornithine and glutamate. The sequence is that of Arginine biosynthesis bifunctional protein ArgJ, mitochondrial from Aspergillus oryzae (strain ATCC 42149 / RIB 40) (Yellow koji mold).